The primary structure comprises 388 residues: F-box protein At3g49510 (388 aa).

In terms of domain architecture, F-box spans 1–47 (MTTISDLSDDLVGDILSRVPFTSLISVRSTCKKWNALSKNQIFGRKT).

The chain is F-box protein At3g49510 from Arabidopsis thaliana (Mouse-ear cress).